Here is a 523-residue protein sequence, read N- to C-terminus: Tyrosine/DOPA decarboxylase 5 (523 aa).

A compositionally biased stretch (polar residues) spans 1–19; it reads MGSLPTDNLESMSICSQNP. Disordered regions lie at residues 1-20 and 47-66; these read MGSL…QNPL and SRSQ…APNH. K321 is subject to N6-(pyridoxal phosphate)lysine.

It belongs to the group II decarboxylase family. As to quaternary structure, homodimer. Pyridoxal 5'-phosphate serves as cofactor. Roots.

The enzyme catalyses L-tyrosine + H(+) = tyramine + CO2. The catalysed reaction is L-dopa + H(+) = dopamine + CO2. It catalyses the reaction 5-hydroxy-L-tryptophan + H(+) = serotonin + CO2. Functionally, may play an important role in providing precursors for alkaloid synthesis in the roots and germinating seedlings. The sequence is that of Tyrosine/DOPA decarboxylase 5 (TYDC5) from Papaver somniferum (Opium poppy).